The sequence spans 167 residues: CKLF-like MARVEL transmembrane domain-containing protein 7 (167 aa).

The MARVEL domain occupies 32 to 158; sequence YPLTHGALFK…SLWLSYKITC (127 aa). The next 4 membrane-spanning stretches (helical) occupy residues 35 to 55, 69 to 89, 102 to 122, and 132 to 152; these read THGA…FICV, FEVV…VHLF, LSEL…SIVI, and LVAG…SLWL.

This sequence belongs to the chemokine-like factor family.

It localises to the membrane. In Mus musculus (Mouse), this protein is CKLF-like MARVEL transmembrane domain-containing protein 7 (Cmtm7).